The sequence spans 391 residues: 8-amino-7-oxononanoate synthase (391 aa).

Residue Arg19 coordinates substrate. Residue 106-107 (GY) coordinates pyridoxal 5'-phosphate. His131 provides a ligand contact to substrate. Pyridoxal 5'-phosphate-binding residues include Ser178, His206, and Thr234. At Lys237 the chain carries N6-(pyridoxal phosphate)lysine. Thr353 contributes to the substrate binding site.

This sequence belongs to the class-II pyridoxal-phosphate-dependent aminotransferase family. BioF subfamily. Homodimer. Pyridoxal 5'-phosphate serves as cofactor.

The enzyme catalyses 6-carboxyhexanoyl-[ACP] + L-alanine + H(+) = (8S)-8-amino-7-oxononanoate + holo-[ACP] + CO2. Its pathway is cofactor biosynthesis; biotin biosynthesis. In terms of biological role, catalyzes the decarboxylative condensation of pimeloyl-[acyl-carrier protein] and L-alanine to produce 8-amino-7-oxononanoate (AON), [acyl-carrier protein], and carbon dioxide. This is 8-amino-7-oxononanoate synthase from Pelobacter propionicus (strain DSM 2379 / NBRC 103807 / OttBd1).